A 170-amino-acid chain; its full sequence is uncharacterized protein (170 aa).

This is an uncharacterized protein from Archaeoglobus fulgidus (strain ATCC 49558 / DSM 4304 / JCM 9628 / NBRC 100126 / VC-16).